Reading from the N-terminus, the 300-residue chain is MNTLVLKIDAILSKHLKKQLAPYTISSQNTYVAFAAKKNGVTVLLYKSGKLVLQGNGANALAQELNLPVAKTVFEASNNSQDIPIIGSDEVGNGSYFGGIAVVASFVDPKDHSFLKKLGVDDSKKLSDKTIQQIAPLLEKQIPHQSLLLSPKKYNELVGKSKPYNAISIKVALHNQAIFLLLQKGIQPKQIVIDAFTSQSNYEKHLKKEKNHFPDPLTFQEKAESHYLAVAVSSIIARNLFLDNLDQLGQDLGYQLPSGAGSASDKVASQLLAAYGMSSLEYSAKLHFANTHKAQALLTK.

The region spanning 83-300 (IPIIGSDEVG…THKAQALLTK (218 aa)) is the RNase H type-2 domain. The a divalent metal cation site is built by D89, E90, and D194.

This sequence belongs to the RNase HII family. RnhC subfamily. Mn(2+) serves as cofactor. Mg(2+) is required as a cofactor.

Its subcellular location is the cytoplasm. The enzyme catalyses Endonucleolytic cleavage to 5'-phosphomonoester.. In terms of biological role, endonuclease that specifically degrades the RNA of RNA-DNA hybrids. The chain is Ribonuclease HIII from Streptococcus pyogenes serotype M3 (strain ATCC BAA-595 / MGAS315).